The chain runs to 396 residues: Period circadian protein (396 aa).

Disordered stretches follow at residues 27-120, 164-188, 253-273, and 333-362; these read VTAP…APPV, LEYSGPGPGHGHGIKRGGSHSWEGE, GGNGNVGSGNGNNNQPSTNQY, and SPSSTNTNPNRPHKHAHVHNSSEKPSTSQA. Over residues 93–114 the composition is skewed to gly residues; it reads GTSGTGNSGDGGGGGGANGTGS. Positions 253 to 262 are enriched in gly residues; that stretch reads GGNGNVGSGN. Low complexity predominate over residues 333–342; sequence SPSSTNTNPN.

Forms a heterodimer with timeless (TIM); the complex then translocates into the nucleus. Post-translationally, phosphorylated with a circadian rhythmicity, probably by the double-time protein (dbt). Phosphorylation could be implicated in the stability of per monomer and in the formation of heterodimer per-tim.

It localises to the nucleus. It is found in the cytoplasm. The protein resides in the perinuclear region. Functionally, essential for biological clock functions. Determines the period length of circadian and ultradian rhythms; an increase in PER dosage leads to shortened circadian rhythms and a decrease leads to lengthened circadian rhythms. Essential for the circadian rhythmicity of locomotor activity, eclosion behavior, and for the rhythmic component of the male courtship song that originates in the thoracic nervous system. The biological cycle depends on the rhythmic formation and nuclear localization of the TIM-PER complex. Light induces the degradation of TIM, which promotes elimination of PER. Nuclear activity of the heterodimer coordinatively regulates PER and TIM transcription through a negative feedback loop. Behaves as a negative element in circadian transcriptional loop. Does not appear to bind DNA, suggesting indirect transcriptional inhibition. This Drosophila pavlovskiana (Fruit fly) protein is Period circadian protein (per).